A 1445-amino-acid chain; its full sequence is CD109 antigen (1445 aa).

The signal sequence occupies residues 1 to 21; the sequence is MQGPPLLTAAHLLCVCTAALA. Asn68, Asn118, Asn247, Asn279, Asn365, Asn419, Asn513, and Asn645 each carry an N-linked (GlcNAc...) asparagine glycan. The bait region (approximate) stretch occupies residues 593–702; sequence DKSVNLMNAS…TWIWLDTNMG (110 aa). A cross-link (isoglutamyl cysteine thioester (Cys-Gln)) is located at residues 921–924; the sequence is CGEQ. N-linked (GlcNAc...) asparagine glycosylation is found at Asn1086 and Asn1355. The GPI-anchor amidated alanine moiety is linked to residue Ala1420. Positions 1421-1445 are cleaved as a propeptide — removed in mature form; it reads SGSHHHSSVIFIFCFKLLYFMELWL.

It belongs to the protease inhibitor I39 (alpha-2-macroglobulin) family. In terms of assembly, heterodimer; disulfide-linked. Interacts with TGFB1 and TGFBR1. Forms a heteromeric complex with TGFBR1, TGFBR2 and TGFBR3 in a ligand-independent manner. N-glycosylated. Post-translationally, 2 forms of 150 (p150) and 120 kDa (p120) exist due to proteolytic degradation from a 180 kDa form. In terms of tissue distribution, widely expressed with high level in uterus, aorta, heart, lung, trachea, placenta and in fetal heart, kidney, liver, spleen and lung. Expressed by CD34(+) acute myeloid leukemia cell lines, T-cell lines, activated T-lymphoblasts, endothelial cells and activated platelets. Isoform 4 is expressed in placenta. Isoform 1 is expressed in keratinocytes and placenta.

The protein resides in the cell membrane. Modulates negatively TGFB1 signaling in keratinocytes. This chain is CD109 antigen (CD109), found in Homo sapiens (Human).